Consider the following 365-residue polypeptide: MKFNDFLDDLVNYEAGKPIELVVREFGIDAKDVIKLASNENPFGTSKRVEEALKEVAKNAHLYPDDSYFELKEGLAKKFGVTSKKLIIGSGSDQIIEFALHAKANRQSGVLMAGVTFAMYEIYAKQTGAKIYRTKSVEHNLSEFLEIYNAHKDEISVIFLCLPNNPLGECIDADEVYKFIKNIDENTLVVLDCAYNEFAKFKDSKKEIKPSEVVKFKNAIYLGTFSKAYALGGMRVGYGVANEEIIGALSKLRAPFNITTPSLRAAIVALGDDEFVQKTMQNNFEQMKRYEDFAEQNGIEFIPSYTNFITFKFNEPKSSQICEKMLKKGIILRDLKSYALNAVRITIGQAWQNDRVFEELEQILK.

Residue lysine 227 is modified to N6-(pyridoxal phosphate)lysine.

It belongs to the class-II pyridoxal-phosphate-dependent aminotransferase family. Histidinol-phosphate aminotransferase subfamily. As to quaternary structure, homodimer. The cofactor is pyridoxal 5'-phosphate.

It catalyses the reaction L-histidinol phosphate + 2-oxoglutarate = 3-(imidazol-4-yl)-2-oxopropyl phosphate + L-glutamate. It participates in amino-acid biosynthesis; L-histidine biosynthesis; L-histidine from 5-phospho-alpha-D-ribose 1-diphosphate: step 7/9. The chain is Histidinol-phosphate aminotransferase from Campylobacter concisus (strain 13826).